The following is a 704-amino-acid chain: Elongation factor G 1 (704 aa).

The 284-residue stretch at 8 to 291 (ERYRNIGISA…AVIDYLPSPA (284 aa)) folds into the tr-type G domain. Residues 17–24 (AHIDAGKT), 88–92 (DTPGH), and 142–145 (NKMD) each bind GTP.

The protein belongs to the TRAFAC class translation factor GTPase superfamily. Classic translation factor GTPase family. EF-G/EF-2 subfamily.

The protein resides in the cytoplasm. Its function is as follows. Catalyzes the GTP-dependent ribosomal translocation step during translation elongation. During this step, the ribosome changes from the pre-translocational (PRE) to the post-translocational (POST) state as the newly formed A-site-bound peptidyl-tRNA and P-site-bound deacylated tRNA move to the P and E sites, respectively. Catalyzes the coordinated movement of the two tRNA molecules, the mRNA and conformational changes in the ribosome. The sequence is that of Elongation factor G 1 from Burkholderia pseudomallei (strain 1710b).